The following is a 496-amino-acid chain: L-arabinose isomerase (496 aa).

Residues glutamate 306, glutamate 331, histidine 348, and histidine 447 each coordinate Mn(2+).

The protein belongs to the arabinose isomerase family. The cofactor is Mn(2+).

The enzyme catalyses beta-L-arabinopyranose = L-ribulose. Its pathway is carbohydrate degradation; L-arabinose degradation via L-ribulose; D-xylulose 5-phosphate from L-arabinose (bacterial route): step 1/3. In terms of biological role, catalyzes the conversion of L-arabinose to L-ribulose. This is L-arabinose isomerase from Geobacillus thermodenitrificans (strain NG80-2).